A 222-amino-acid chain; its full sequence is Cytidylate kinase (222 aa).

11 to 19 (GPSGSGKST) is an ATP binding site.

This sequence belongs to the cytidylate kinase family. Type 1 subfamily.

It is found in the cytoplasm. The catalysed reaction is CMP + ATP = CDP + ADP. The enzyme catalyses dCMP + ATP = dCDP + ADP. The chain is Cytidylate kinase from Ureaplasma urealyticum serovar 10 (strain ATCC 33699 / Western).